Here is a 264-residue protein sequence, read N- to C-terminus: S-adenosylmethionine decarboxylase proenzyme (264 aa).

The Schiff-base intermediate with substrate; via pyruvic acid role is filled by Ser111. Pyruvic acid (Ser); by autocatalysis is present on Ser111. The active-site Proton acceptor; for processing activity is His116. Cys139 functions as the Proton donor; for catalytic activity in the catalytic mechanism.

It belongs to the prokaryotic AdoMetDC family. Type 2 subfamily. In terms of assembly, heterooctamer of four alpha and four beta chains arranged as a tetramer of alpha/beta heterodimers. Requires pyruvate as cofactor. Post-translationally, is synthesized initially as an inactive proenzyme. Formation of the active enzyme involves a self-maturation process in which the active site pyruvoyl group is generated from an internal serine residue via an autocatalytic post-translational modification. Two non-identical subunits are generated from the proenzyme in this reaction, and the pyruvate is formed at the N-terminus of the alpha chain, which is derived from the carboxyl end of the proenzyme. The post-translation cleavage follows an unusual pathway, termed non-hydrolytic serinolysis, in which the side chain hydroxyl group of the serine supplies its oxygen atom to form the C-terminus of the beta chain, while the remainder of the serine residue undergoes an oxidative deamination to produce ammonia and the pyruvoyl group blocking the N-terminus of the alpha chain.

It catalyses the reaction S-adenosyl-L-methionine + H(+) = S-adenosyl 3-(methylsulfanyl)propylamine + CO2. It participates in amine and polyamine biosynthesis; S-adenosylmethioninamine biosynthesis; S-adenosylmethioninamine from S-adenosyl-L-methionine: step 1/1. Functionally, catalyzes the decarboxylation of S-adenosylmethionine to S-adenosylmethioninamine (dcAdoMet), the propylamine donor required for the synthesis of the polyamines spermine and spermidine from the diamine putrescine. The polypeptide is S-adenosylmethionine decarboxylase proenzyme (Geobacillus kaustophilus (strain HTA426)).